The sequence spans 598 residues: mRNA-capping enzyme (598 aa).

Residues 1-215 (MSQTGAPPRW…GSASAPASEP (215 aa)) form a TPase region. In terms of domain architecture, Tyrosine-protein phosphatase spans 25–183 (LPMKTMLGPR…FRRYGDVEDA (159 aa)). Cys-126 (phosphocysteine intermediate) is an active-site residue. The disordered stretch occupies residues 186-227 (APPLPEWCFDEDEEEDGEEDGSASAPASEPSSSHTGQSKKKK). Residues 193 to 206 (CFDEDEEEDGEEDG) are compositionally biased toward acidic residues. The span at 207–218 (SASAPASEPSSS) shows a compositional bias: low complexity. The GTase stretch occupies residues 233–598 (GAVFLEGVSV…PKRSANSIPQ (366 aa)). The active-site N6-GMP-lysine intermediate is the Lys-298. Residues Arg-303, Arg-319, 347–349 (DGE), 462–464 (KWK), and 532–537 (RQRVDK) contribute to the GTP site. The tract at residues 575–598 (RKNPADSDLMPPPPPKRSANSIPQ) is disordered.

In the N-terminal section; belongs to the non-receptor class of the protein-tyrosine phosphatase family. It in the C-terminal section; belongs to the eukaryotic GTase family.

It localises to the nucleus. The enzyme catalyses a 5'-end triphospho-ribonucleoside in mRNA + H2O = a 5'-end diphospho-ribonucleoside in mRNA + phosphate + H(+). It catalyses the reaction a 5'-end diphospho-ribonucleoside in mRNA + GTP + H(+) = a 5'-end (5'-triphosphoguanosine)-ribonucleoside in mRNA + diphosphate. Its function is as follows. Bifunctional mRNA-capping enzyme exhibiting RNA 5'-triphosphate monophosphatase activity in the N-terminal part and mRNA guanylyltransferase activity in the C-terminal part. Catalyzes the first two steps of cap formation: by removing the gamma-phosphate from the 5'-triphosphate end of nascent mRNA to yield a diphosphate end, and by transferring the GMP moiety of GTP to the 5'-diphosphate terminus of RNA via a covalent enzyme-GMP reaction intermediate. The protein is mRNA-capping enzyme (rngtt) of Danio rerio (Zebrafish).